We begin with the raw amino-acid sequence, 507 residues long: MDVPCLWYSLLILLLLFIFLLIHHCFTTSKTQNMFLPPSPRKLPIIGNLHQLGSHPHRSLRKLSQKYGPVMLLHLGSKPVIVASSVDAARDILKTHDHVWATRPKYSIADSLLYGSKDVGFSPFGEYWWQVRSIVVLHLLSNKRVQSYRDVREEETANMIEKIRQGCDASVINLGEHLCFLTNNITSRVALGRTYDERESGIDAKDILEQFLQLLDTFNVGDYIPWLKWVNKITGLDTKVEKIAKKLDTFLDSVIEEHIIRNKKEEYAITDEAKDFVDVLLEIQNGKETDFPLQRDSLKAILLDAFAAGTDTIYTNLDWTMADVLRQPRAMKTLQNEVRGLAQGKSEITEDDLKNMQYLRAVIKESLRLHPPNSLLVPRESMEDVKLLGYYHIPARTQALINVWAIGRDPLSWENPEEFCPERFLNNDIDMKGLKFELLPFGSGRRGCPGSSFAIAVIELALARLVHKFNFALPKGTKPEDLDMTECTGIATRRKSPLPVVATPFSG.

Residues 3–23 traverse the membrane as a helical segment; that stretch reads VPCLWYSLLILLLLFIFLLIH. Cysteine 448 provides a ligand contact to heme.

Belongs to the cytochrome P450 family. Heme is required as a cofactor.

It localises to the membrane. May have a role in maturation, such as during flavor formation or other metabolite production specific to aging tissues. The polypeptide is Cytochrome P450 71A4 (CYP71A4) (Solanum melongena (Eggplant)).